Here is a 442-residue protein sequence, read N- to C-terminus: Elongation factor 1-alpha (442 aa).

The 224-residue stretch at 5-228 folds into the tr-type G domain; that stretch reads KTHINIVVIG…DSVTPPERPV (224 aa). The segment at 14–21 is G1; the sequence is GHVDSGKS. 14–21 is a GTP binding site; sequence GHVDSGKS. Residues 70–74 are G2; it reads GITID. A G3 region spans residues 91–94; the sequence is DAPG. GTP-binding positions include 91–95 and 153–156; these read DAPGH and NKMD. The segment at 153 to 156 is G4; the sequence is NKMD. Residues 192–194 form a G5 region; that stretch reads SGF.

It belongs to the TRAFAC class translation factor GTPase superfamily. Classic translation factor GTPase family. EF-Tu/EF-1A subfamily.

Its subcellular location is the cytoplasm. Functionally, this protein promotes the GTP-dependent binding of aminoacyl-tRNA to the A-site of ribosomes during protein biosynthesis. The chain is Elongation factor 1-alpha from Entamoeba histolytica (strain ATCC 30459 / HM-1:IMSS / ABRM).